The primary structure comprises 172 residues: 3-hydroxydecanoyl-[acyl-carrier-protein] dehydratase (172 aa).

H71 is a catalytic residue.

This sequence belongs to the thioester dehydratase family. FabA subfamily. As to quaternary structure, homodimer.

It localises to the cytoplasm. It catalyses the reaction a (3R)-hydroxyacyl-[ACP] = a (2E)-enoyl-[ACP] + H2O. The enzyme catalyses (3R)-hydroxydecanoyl-[ACP] = (2E)-decenoyl-[ACP] + H2O. The catalysed reaction is (2E)-decenoyl-[ACP] = (3Z)-decenoyl-[ACP]. Its pathway is lipid metabolism; fatty acid biosynthesis. Necessary for the introduction of cis unsaturation into fatty acids. Catalyzes the dehydration of (3R)-3-hydroxydecanoyl-ACP to E-(2)-decenoyl-ACP and then its isomerization to Z-(3)-decenoyl-ACP. Can catalyze the dehydratase reaction for beta-hydroxyacyl-ACPs with saturated chain lengths up to 16:0, being most active on intermediate chain length. This is 3-hydroxydecanoyl-[acyl-carrier-protein] dehydratase from Salmonella arizonae (strain ATCC BAA-731 / CDC346-86 / RSK2980).